The primary structure comprises 250 residues: Ubiquinone/menaquinone biosynthesis C-methyltransferase UbiE (250 aa).

S-adenosyl-L-methionine is bound by residues threonine 74, aspartate 94, 122–123 (DA), and serine 139.

This sequence belongs to the class I-like SAM-binding methyltransferase superfamily. MenG/UbiE family.

The catalysed reaction is a 2-demethylmenaquinol + S-adenosyl-L-methionine = a menaquinol + S-adenosyl-L-homocysteine + H(+). The enzyme catalyses a 2-methoxy-6-(all-trans-polyprenyl)benzene-1,4-diol + S-adenosyl-L-methionine = a 5-methoxy-2-methyl-3-(all-trans-polyprenyl)benzene-1,4-diol + S-adenosyl-L-homocysteine + H(+). The protein operates within quinol/quinone metabolism; menaquinone biosynthesis; menaquinol from 1,4-dihydroxy-2-naphthoate: step 2/2. It participates in cofactor biosynthesis; ubiquinone biosynthesis. Methyltransferase required for the conversion of demethylmenaquinol (DMKH2) to menaquinol (MKH2) and the conversion of 2-polyprenyl-6-methoxy-1,4-benzoquinol (DDMQH2) to 2-polyprenyl-3-methyl-6-methoxy-1,4-benzoquinol (DMQH2). This is Ubiquinone/menaquinone biosynthesis C-methyltransferase UbiE from Cereibacter sphaeroides (strain ATCC 17029 / ATH 2.4.9) (Rhodobacter sphaeroides).